Here is a 259-residue protein sequence, read N- to C-terminus: Type III pantothenate kinase (259 aa).

6–13 (DIGNTNIT) lines the ATP pocket. 113 to 116 (GADR) contacts substrate. The active-site Proton acceptor is D115. D135 provides a ligand contact to K(+). ATP is bound at residue T138. A substrate-binding site is contributed by T190.

This sequence belongs to the type III pantothenate kinase family. In terms of assembly, homodimer. NH4(+) is required as a cofactor. The cofactor is K(+).

The protein localises to the cytoplasm. It carries out the reaction (R)-pantothenate + ATP = (R)-4'-phosphopantothenate + ADP + H(+). Its pathway is cofactor biosynthesis; coenzyme A biosynthesis; CoA from (R)-pantothenate: step 1/5. Its function is as follows. Catalyzes the phosphorylation of pantothenate (Pan), the first step in CoA biosynthesis. In Endomicrobium trichonymphae, this protein is Type III pantothenate kinase.